The following is a 415-amino-acid chain: Gamma-glutamyl phosphate reductase (415 aa).

The protein belongs to the gamma-glutamyl phosphate reductase family.

The protein localises to the cytoplasm. The enzyme catalyses L-glutamate 5-semialdehyde + phosphate + NADP(+) = L-glutamyl 5-phosphate + NADPH + H(+). It participates in amino-acid biosynthesis; L-proline biosynthesis; L-glutamate 5-semialdehyde from L-glutamate: step 2/2. Functionally, catalyzes the NADPH-dependent reduction of L-glutamate 5-phosphate into L-glutamate 5-semialdehyde and phosphate. The product spontaneously undergoes cyclization to form 1-pyrroline-5-carboxylate. This is Gamma-glutamyl phosphate reductase from Listeria monocytogenes serovar 1/2a (strain ATCC BAA-679 / EGD-e).